The primary structure comprises 297 residues: Light-independent protochlorophyllide reductase iron-sulfur ATP-binding protein (297 aa).

Residues 41–46 (GIGKST) and Lys-70 each bind ATP. Ser-45 provides a ligand contact to Mg(2+). [4Fe-4S] cluster contacts are provided by Cys-126 and Cys-160. Residues 211–212 (NR) and 235–237 (PDL) each bind ATP.

This sequence belongs to the NifH/BchL/ChlL family. As to quaternary structure, homodimer. Protochlorophyllide reductase is composed of three subunits; BchL, BchN and BchB. The cofactor is [4Fe-4S] cluster.

The enzyme catalyses chlorophyllide a + oxidized 2[4Fe-4S]-[ferredoxin] + 2 ADP + 2 phosphate = protochlorophyllide a + reduced 2[4Fe-4S]-[ferredoxin] + 2 ATP + 2 H2O. It participates in porphyrin-containing compound metabolism; bacteriochlorophyll biosynthesis (light-independent). Functionally, component of the dark-operative protochlorophyllide reductase (DPOR) that uses Mg-ATP and reduced ferredoxin to reduce ring D of protochlorophyllide (Pchlide) to form chlorophyllide a (Chlide). This reaction is light-independent. The L component serves as a unique electron donor to the NB-component of the complex, and binds Mg-ATP. This chain is Light-independent protochlorophyllide reductase iron-sulfur ATP-binding protein, found in Methylorubrum extorquens (strain CM4 / NCIMB 13688) (Methylobacterium extorquens).